We begin with the raw amino-acid sequence, 367 residues long: Aurora kinase (367 aa).

The disordered stretch occupies residues 30–49; that stretch reads TTATNGAPPQARVQPGKGYR. The region spanning 109–360 is the Protein kinase domain; it reads FEIGKVLGKG…LKEVKKHPWI (252 aa). ATP contacts are provided by residues 115–123 and Lys138; that span reads LGKGKFGRV. Asp232 serves as the catalytic Proton acceptor.

This sequence belongs to the protein kinase superfamily. Ser/Thr protein kinase family. Aurora subfamily.

It localises to the nucleus. The protein resides in the cytoplasm. It is found in the cytoskeleton. The protein localises to the spindle. Its subcellular location is the chromosome. It localises to the centromere. The protein resides in the kinetochore. The catalysed reaction is L-seryl-[protein] + ATP = O-phospho-L-seryl-[protein] + ADP + H(+). It carries out the reaction L-threonyl-[protein] + ATP = O-phospho-L-threonyl-[protein] + ADP + H(+). Functionally, component of the chromosomal passenger complex (CPC), a complex that acts as a key regulator of chromosome segregation and cytokinesis. Has a role in error-correction of aberrent kinetochore-microtubule attachments to ensure that sister kinetochores become bioriented and connect to opposite poles by promoting spindle assembly checkpoint signaling. The polypeptide is Aurora kinase (IPL1) (Eremothecium gossypii (strain ATCC 10895 / CBS 109.51 / FGSC 9923 / NRRL Y-1056) (Yeast)).